The following is a 355-amino-acid chain: UDP-3-O-acylglucosamine N-acyltransferase (355 aa).

The active-site Proton acceptor is H258.

The protein belongs to the transferase hexapeptide repeat family. LpxD subfamily. Homotrimer.

The catalysed reaction is a UDP-3-O-[(3R)-3-hydroxyacyl]-alpha-D-glucosamine + a (3R)-hydroxyacyl-[ACP] = a UDP-2-N,3-O-bis[(3R)-3-hydroxyacyl]-alpha-D-glucosamine + holo-[ACP] + H(+). Its pathway is bacterial outer membrane biogenesis; LPS lipid A biosynthesis. Functionally, catalyzes the N-acylation of UDP-3-O-acylglucosamine using 3-hydroxyacyl-ACP as the acyl donor. Is involved in the biosynthesis of lipid A, a phosphorylated glycolipid that anchors the lipopolysaccharide to the outer membrane of the cell. The chain is UDP-3-O-acylglucosamine N-acyltransferase from Bradyrhizobium sp. (strain ORS 278).